The following is a 279-amino-acid chain: Inhibitor of growth protein 1 (279 aa).

The segment at 115 to 206 (AHQDISDGTG…EASPADLPID (92 aa)) is disordered. A Glycyl lysine isopeptide (Lys-Gly) (interchain with G-Cter in SUMO2) cross-link involves residue K135. A compositionally biased stretch (basic and acidic residues) spans 154-171 (RNNENRENASNNHDHDDI). Basic residues predominate over residues 179–191 (KKAKTSKKKKRSK). The PHD-type zinc-finger motif lies at 210-259 (PTYCLCNQVSYGEMIGCDNDECPIEWFHFSCVGLNHKPKGKWYCPKCRGE). 8 residues coordinate Zn(2+): C213, C215, C226, C231, H237, C240, C253, and C256. Residues 262 to 279 (KTMDKALEKSKKERAYNR) form a PBR region.

The protein belongs to the ING family. As to quaternary structure, interacts with H3K4me3 and to a lesser extent with H3K4me2. Isoform 2 interacts with RSL1D1. In terms of tissue distribution, in the adult, widely expressed with highest levels in thymus and testis.

The protein localises to the nucleus. Isoform 1 inhibits p53-dependent transcriptional activation and may function as an oncoprotein. Isoform 2 acts as a negative growth regulator by cooperating with p53 in transcriptional activation of p53-responsive genes and may act as a tumor suppressor. The protein is Inhibitor of growth protein 1 (Ing1) of Mus musculus (Mouse).